Reading from the N-terminus, the 258-residue chain is Ribosomal RNA small subunit methyltransferase A (258 aa).

S-adenosyl-L-methionine contacts are provided by His-9, Leu-11, Gly-36, Glu-57, Asp-83, and Asn-102.

This sequence belongs to the class I-like SAM-binding methyltransferase superfamily. rRNA adenine N(6)-methyltransferase family. RsmA subfamily.

It is found in the cytoplasm. The enzyme catalyses adenosine(1518)/adenosine(1519) in 16S rRNA + 4 S-adenosyl-L-methionine = N(6)-dimethyladenosine(1518)/N(6)-dimethyladenosine(1519) in 16S rRNA + 4 S-adenosyl-L-homocysteine + 4 H(+). In terms of biological role, specifically dimethylates two adjacent adenosines (A1518 and A1519) in the loop of a conserved hairpin near the 3'-end of 16S rRNA in the 30S particle. May play a critical role in biogenesis of 30S subunits. The polypeptide is Ribosomal RNA small subunit methyltransferase A (Caulobacter vibrioides (strain ATCC 19089 / CIP 103742 / CB 15) (Caulobacter crescentus)).